The primary structure comprises 588 residues: Arginine--tRNA ligase (588 aa).

The short motif at 129 to 139 (PNIAKEMHVGH) is the 'HIGH' region element.

Belongs to the class-I aminoacyl-tRNA synthetase family. Monomer.

The protein resides in the cytoplasm. The enzyme catalyses tRNA(Arg) + L-arginine + ATP = L-arginyl-tRNA(Arg) + AMP + diphosphate. The sequence is that of Arginine--tRNA ligase from Frankia casuarinae (strain DSM 45818 / CECT 9043 / HFP020203 / CcI3).